The following is an 88-amino-acid chain: Small ribosomal subunit protein uS17 (88 aa).

It belongs to the universal ribosomal protein uS17 family. Part of the 30S ribosomal subunit.

Its function is as follows. One of the primary rRNA binding proteins, it binds specifically to the 5'-end of 16S ribosomal RNA. The protein is Small ribosomal subunit protein uS17 of Pseudomonas fluorescens (strain ATCC BAA-477 / NRRL B-23932 / Pf-5).